Here is a 238-residue protein sequence, read N- to C-terminus: Orotate phosphoribosyltransferase (238 aa).

Lys-29 lines the 5-phospho-alpha-D-ribose 1-diphosphate pocket. Position 37-38 (37-38) interacts with orotate; the sequence is FF. 5-phospho-alpha-D-ribose 1-diphosphate contacts are provided by residues 87-88, Arg-118, Lys-119, Lys-122, His-124, and 144-152; these read YK and DDVITAGTA. Positions 148 and 176 each coordinate orotate.

The protein belongs to the purine/pyrimidine phosphoribosyltransferase family. PyrE subfamily. In terms of assembly, homodimer.

It catalyses the reaction orotidine 5'-phosphate + diphosphate = orotate + 5-phospho-alpha-D-ribose 1-diphosphate. The protein operates within pyrimidine metabolism; UMP biosynthesis via de novo pathway; UMP from orotate: step 1/2. Catalyzes the transfer of a ribosyl phosphate group from 5-phosphoribose 1-diphosphate to orotate, leading to the formation of orotidine monophosphate (OMP). In Coccidioides immitis (strain RS) (Valley fever fungus), this protein is Orotate phosphoribosyltransferase (URA5).